Here is a 283-residue protein sequence, read N- to C-terminus: MREVEKPLILSIVGNILLGLIKIIIGYVYSSISLISDGIHSLSDVITSIIGIIGVKIASKPPDESHPYGHSRFECLFSFFIGLALFFTAYEIGKFAVERIIYGEVIEVNAIMVGVAILSIVVKELMTRYSLFVGKKLNSQVLIADAYHHRSDALSSVVVLVGLLLQKFGIYYGDAIAGIIVALMIAKVAFDICLTNIDYLTGRAPPKKFFELIEKEALNVDKVIGVHDIKAHYVGPRIHVELHVEVPSNISAKEMHDIEVAVKNRLESLENVERAYVHVDIVD.

The next 5 membrane-spanning stretches (helical) occupy residues 8-28 (LILSIVGNILLGLIKIIIGYV), 38-58 (GIHSLSDVITSIIGIIGVKIA), 73-93 (FECLFSFFIGLALFFTAYEIG), 100-120 (IIYGEVIEVNAIMVGVAILSI), and 175-195 (AIAGIIVALMIAKVAFDICLT).

The protein belongs to the cation diffusion facilitator (CDF) transporter (TC 2.A.4) family.

The protein resides in the cell membrane. This is an uncharacterized protein from Methanocaldococcus jannaschii (strain ATCC 43067 / DSM 2661 / JAL-1 / JCM 10045 / NBRC 100440) (Methanococcus jannaschii).